We begin with the raw amino-acid sequence, 508 residues long: Photosystem II CP47 reaction center protein (508 aa).

6 consecutive transmembrane segments (helical) span residues 21 to 36, 101 to 115, 140 to 156, 203 to 218, 237 to 252, and 457 to 472; these read SVHI…WAGS, IVFS…IWHW, GIHL…FGAF, IAAG…FHLS, VLSS…AFVV, and SFAL…HGSR.

The protein belongs to the PsbB/PsbC family. PsbB subfamily. As to quaternary structure, PSII is composed of 1 copy each of membrane proteins PsbA, PsbB, PsbC, PsbD, PsbE, PsbF, PsbH, PsbI, PsbJ, PsbK, PsbL, PsbM, PsbT, PsbX, PsbY, PsbZ, Psb30/Ycf12, at least 3 peripheral proteins of the oxygen-evolving complex and a large number of cofactors. It forms dimeric complexes. Binds multiple chlorophylls. PSII binds additional chlorophylls, carotenoids and specific lipids. is required as a cofactor.

Its subcellular location is the plastid. It localises to the chloroplast thylakoid membrane. Functionally, one of the components of the core complex of photosystem II (PSII). It binds chlorophyll and helps catalyze the primary light-induced photochemical processes of PSII. PSII is a light-driven water:plastoquinone oxidoreductase, using light energy to abstract electrons from H(2)O, generating O(2) and a proton gradient subsequently used for ATP formation. The sequence is that of Photosystem II CP47 reaction center protein from Draba nemorosa (Woodland whitlowgrass).